The chain runs to 338 residues: Bifunctional methylenetetrahydrofolate dehydrogenase/cyclohydrolase 2, mitochondrial (338 aa).

Substrate-binding positions include 89 to 93 (YVRNK) and 136 to 138 (VQL). NAD(+) contacts are provided by residues 205-207 (GRS) and Arg238. 314–318 (PGGVG) lines the substrate pocket.

The protein belongs to the tetrahydrofolate dehydrogenase/cyclohydrolase family. Requires Mg(2+) as cofactor. In terms of tissue distribution, widely expressed.

It localises to the mitochondrion inner membrane. It carries out the reaction (6R)-5,10-methylene-5,6,7,8-tetrahydrofolate + NAD(+) = (6R)-5,10-methenyltetrahydrofolate + NADH. The catalysed reaction is (6R)-5,10-methenyltetrahydrofolate + H2O = (6R)-10-formyltetrahydrofolate + H(+). It catalyses the reaction (6R)-5,10-methylene-5,6,7,8-tetrahydrofolate + NADP(+) = (6R)-5,10-methenyltetrahydrofolate + NADPH. It participates in one-carbon metabolism; tetrahydrofolate interconversion. Its function is as follows. Bifunctional mitochondrial folate-interconverting enzyme that has both NAD/NADP-dependent methylenetetrahydrofolate dehydrogenase and methenyltetrahydrofolate cyclohydrolase activities. The polypeptide is Bifunctional methylenetetrahydrofolate dehydrogenase/cyclohydrolase 2, mitochondrial (Mus musculus (Mouse)).